We begin with the raw amino-acid sequence, 268 residues long: Testis-specific serine/threonine-protein kinase 3 (268 aa).

In terms of domain architecture, Protein kinase spans 10 to 265 (YQLGKTIGEG…IEEVSWHPWL (256 aa)). ATP-binding positions include 16 to 24 (IGEGTYSKV) and lysine 39. Residue aspartate 134 is the Proton acceptor of the active site. Position 166 is a phosphoserine (serine 166). Position 168 is a phosphothreonine (threonine 168).

Belongs to the protein kinase superfamily. CAMK Ser/Thr protein kinase family. It depends on Mg(2+) as a cofactor. The cofactor is Mn(2+). Autophosphorylated at Ser-166. Phosphorylation at Thr-168 by PDPK1 activates the serine/threonine protein kinase activity.

It is found in the cell projection. Its subcellular location is the cilium. The protein localises to the flagellum. It carries out the reaction L-seryl-[protein] + ATP = O-phospho-L-seryl-[protein] + ADP + H(+). The catalysed reaction is L-threonyl-[protein] + ATP = O-phospho-L-threonyl-[protein] + ADP + H(+). With respect to regulation, activated by phosphorylation on Thr-168 by PDPK1. In terms of biological role, serine/threonine protein kinase required for spermatid development and male fertility. The sequence is that of Testis-specific serine/threonine-protein kinase 3 from Homo sapiens (Human).